The chain runs to 1336 residues: Zinc finger protein 335 (1336 aa).

2 disordered regions span residues 1-108 and 199-222; these read MEEN…LVHS and PTST…LAQP. Low complexity-rich tracts occupy residues 31 to 45 and 54 to 65; these read TSEA…AATA and SGVGQSSDSGSR. The C2H2-type 1 zinc-finger motif lies at 247–270; it reads FKCKMCQYRSSTKATLLRHMRERH. 2 disordered regions span residues 282–398 and 415–442; these read AGKR…PSSS and VSQS…GRPS. Positions 300–331 are enriched in acidic residues; sequence EEGPEEEEEDDDIVDAGAIDDLEEDSDYNPAE. Residues 339-349 are compositionally biased toward low complexity; that stretch reads LRLQRPTPSTL. Residues 350 to 361 are compositionally biased toward basic residues; the sequence is RPRRRPGRPRKL. The span at 362-373 shows a compositional bias: basic and acidic residues; it reads PRLETSDLHDGI. Over residues 378 to 387 the composition is skewed to polar residues; the sequence is VSSQSTQSPP. C2H2-type zinc fingers lie at residues 465-487, 495-517, 523-545, 562-584, 590-612, 621-643, 649-672, and 678-701; these read YLCR…VNSH, FKCL…MFNH, YKCD…AAVH, FPCP…MKTH, HMCD…LLTH, FKCE…QLSH, FKCS…AVKH, and FACE…RCRH. Disordered stretches follow at residues 732-766 and 961-1013; these read LKQQ…TPPL and LQCG…AAAS. Residues 752-766 are compositionally biased toward pro residues; sequence PQEPAPFQPPETPPL. Serine 975 and serine 1006 each carry phosphoserine. 4 consecutive C2H2-type zinc fingers follow at residues 1018 to 1040, 1046 to 1068, 1074 to 1096, and 1102 to 1125; these read FSCK…KRAH, FKCP…MAQH, HQCN…MLTH, and FSCH…QRLH. Lysine 1021 participates in a covalent cross-link: Glycyl lysine isopeptide (Lys-Gly) (interchain with G-Cter in SUMO2). At serine 1148 the chain carries Phosphoserine.

The protein belongs to the krueppel C2H2-type zinc-finger protein family. In terms of assembly, interacts with NCOA6; may enhance ligand-dependent transcriptional activation by nuclear hormone receptors. Interacts with CNOT6. Interacts with CNOT9; the interaction is direct. Component of a nuclear receptor-mediated transcription complex composed of at least ZNF335, CCAR2 and EMSY; the complex stimulates the transcription of nuclear receptor target genes such as SOX9 and HOXA1. Within the complex interacts with EMSY and interacts (via C-terminus) with CCAR2. Interacts with members of histone H3'Lys4'(H3K4) methyltransferase complexes ASH2L, CXXC1, KMT2A/MLL1, RBBP5, SETD1A and WDR5. Component of a histone methylation complex composed of at least ZNF335, RBBP5, ASH2L and WDR5; the complex may have histone H3-specific methyltransferase activity, however does not have specificity for 'Lys-4' of histone H3. Interacts with RBBP5 and WDR5. Interacts with ASHL2. Components of this complex may associate with components of the ZNF335-CCAR2-EMSY nuclear receptor-mediated transcription complex to form a complex at least composed of ZNF335, HCFC1, CCAR2, EMSY, MKI67, RBBP5, ASH2L and WDR5. Within this complex also interacts with HCFC1 and MKI67.

It is found in the nucleus. Component or associated component of some histone methyltransferase complexes may regulate transcription through recruitment of those complexes on gene promoters. Enhances ligand-dependent transcriptional activation by nuclear hormone receptors. Plays an important role in neural progenitor cell proliferation and self-renewal through the regulation of specific genes involved brain development, including REST. Also controls the expression of genes involved in somatic development and regulates, for instance, lymphoblast proliferation. The protein is Zinc finger protein 335 (Znf335) of Rattus norvegicus (Rat).